The sequence spans 178 residues: Peptide deformylase (178 aa).

2 residues coordinate Fe cation: Cys-102 and His-144. The active site involves Glu-145. Residue His-148 coordinates Fe cation.

This sequence belongs to the polypeptide deformylase family. Fe(2+) is required as a cofactor.

It carries out the reaction N-terminal N-formyl-L-methionyl-[peptide] + H2O = N-terminal L-methionyl-[peptide] + formate. In terms of biological role, removes the formyl group from the N-terminal Met of newly synthesized proteins. Requires at least a dipeptide for an efficient rate of reaction. N-terminal L-methionine is a prerequisite for activity but the enzyme has broad specificity at other positions. The sequence is that of Peptide deformylase from Leptospira borgpetersenii serovar Hardjo-bovis (strain JB197).